Consider the following 319-residue polypeptide: Acetyl-coenzyme A carboxylase carboxyl transferase subunit alpha (319 aa).

A CoA carboxyltransferase C-terminal domain is found at 32 to 293 (NVETEVRALR…KAVLLNELDA (262 aa)).

Belongs to the AccA family. As to quaternary structure, acetyl-CoA carboxylase is a heterohexamer composed of biotin carboxyl carrier protein (AccB), biotin carboxylase (AccC) and two subunits each of ACCase subunit alpha (AccA) and ACCase subunit beta (AccD).

Its subcellular location is the cytoplasm. It catalyses the reaction N(6)-carboxybiotinyl-L-lysyl-[protein] + acetyl-CoA = N(6)-biotinyl-L-lysyl-[protein] + malonyl-CoA. It functions in the pathway lipid metabolism; malonyl-CoA biosynthesis; malonyl-CoA from acetyl-CoA: step 1/1. In terms of biological role, component of the acetyl coenzyme A carboxylase (ACC) complex. First, biotin carboxylase catalyzes the carboxylation of biotin on its carrier protein (BCCP) and then the CO(2) group is transferred by the carboxyltransferase to acetyl-CoA to form malonyl-CoA. In Xanthomonas axonopodis pv. citri (strain 306), this protein is Acetyl-coenzyme A carboxylase carboxyl transferase subunit alpha.